The primary structure comprises 269 residues: Zinc import ATP-binding protein ZnuC (269 aa).

One can recognise an ABC transporter domain in the interval 6 to 221 (VRLTQVGVSF…PAFVELFGQD (216 aa)). 38–45 (GPNGAGKT) serves as a coordination point for ATP.

This sequence belongs to the ABC transporter superfamily. Zinc importer (TC 3.A.1.15.5) family. The complex is composed of two ATP-binding proteins (ZnuC), two transmembrane proteins (ZnuB) and a solute-binding protein (ZnuA).

It localises to the cell inner membrane. The enzyme catalyses Zn(2+)(out) + ATP(in) + H2O(in) = Zn(2+)(in) + ADP(in) + phosphate(in) + H(+)(in). In terms of biological role, part of the ABC transporter complex ZnuABC involved in zinc import. Responsible for energy coupling to the transport system. In Pseudomonas aeruginosa (strain UCBPP-PA14), this protein is Zinc import ATP-binding protein ZnuC.